Reading from the N-terminus, the 342-residue chain is Terpene cyclase resF (342 aa).

5 consecutive transmembrane segments (helical) span residues 5-25 (VSVVFVSLIIAAAVGVWGVFA), 81-101 (FMAQLLANVFAIPIVLLTEDF), 115-135 (WGVFSQLATSAVMCPLYGVCF), 151-171 (STWIVLISVLIGYGAPAMLIF), and 182-202 (IWGVLAFTVYPLYVCLTASLL). The N-linked (GlcNAc...) asparagine glycan is linked to Asn224. Transmembrane regions (helical) follow at residues 229-249 (YVVAGIVGVAGHLSYIGFHLG), 269-289 (FLQIDYVITFAAMLTLAWHEL), and 305-325 (YLLLGWLFIGPGATLAAAWAL).

This sequence belongs to the membrane-bound ascI terpene cyclase family.

Its subcellular location is the membrane. It functions in the pathway antifungal biosynthesis. Functionally, cyclase; part of the gene cluster that mediates the biosynthesis of the tetrahydropyranyl antifungal agent restricticin that acts as an inhibitor of CYP51 and blocks the ergosterol biosynthesis. The highly reducing polyketide synthase resH, the short chain dehydrogenase resG, the cyclase resF, the FAD-dependent monooxygenase resA and the enoylreductase resD are required to generate the first stable intermediate desmethylrestrictinol. ResH with resD biosynthesize the first polyketide chain intermediate that is reduced by resG, followed by epoxidation by resA before 6-endo cyclization via epoxide opening by resF leads to desmethylrestrictinol. The methyltransferase resE then catalyzes the C4 O-methylation of desmethylrestrictinol to produce restrictinol, and the nonribosomal peptide synthetase resC catalyzes the C3 esterification of restrictinol with glycine that leads to restricticin. This chain is Terpene cyclase resF, found in Aspergillus sclerotiorum.